We begin with the raw amino-acid sequence, 119 residues long: Large ribosomal subunit protein uL18 (119 aa).

It belongs to the universal ribosomal protein uL18 family. In terms of assembly, part of the 50S ribosomal subunit; part of the 5S rRNA/L5/L18/L25 subcomplex. Contacts the 5S and 23S rRNAs.

In terms of biological role, this is one of the proteins that bind and probably mediate the attachment of the 5S RNA into the large ribosomal subunit, where it forms part of the central protuberance. This is Large ribosomal subunit protein uL18 from Borrelia recurrentis (strain A1).